The chain runs to 132 residues: Small ribosomal subunit protein uS11 (132 aa).

Belongs to the universal ribosomal protein uS11 family. Part of the 30S ribosomal subunit. Interacts with proteins S7 and S18. Binds to IF-3.

Located on the platform of the 30S subunit, it bridges several disparate RNA helices of the 16S rRNA. Forms part of the Shine-Dalgarno cleft in the 70S ribosome. The sequence is that of Small ribosomal subunit protein uS11 from Dichelobacter nodosus (strain VCS1703A).